The chain runs to 178 residues: Large ribosomal subunit protein uL13m (178 aa).

The protein belongs to the universal ribosomal protein uL13 family. Component of the mitochondrial ribosome large subunit (39S) which comprises a 16S rRNA and about 50 distinct proteins. Interacts with OXA1L.

It localises to the mitochondrion. This Bos taurus (Bovine) protein is Large ribosomal subunit protein uL13m (MRPL13).